Reading from the N-terminus, the 274-residue chain is Secreted RxLR effector protein 144 (274 aa).

Positions 1 to 20 are cleaved as a signal peptide; that stretch reads MRPWLLLLVGLSSFFALSTS. A RxLR-dEER motif is present at residues 49-72; the sequence is RKLRAFGGDTNTLKDSGKARREEK.

It belongs to the RxLR effector family.

It is found in the secreted. The protein resides in the host nucleus. Its subcellular location is the host cytoplasm. Functionally, secreted effector that completely suppresses the host cell death induced by cell death-inducing proteins. The sequence is that of Secreted RxLR effector protein 144 from Plasmopara viticola (Downy mildew of grapevine).